The sequence spans 661 residues: UvrABC system protein B (661 aa).

Residues Ala25 to Arg182 form the Helicase ATP-binding domain. Gly38 to Thr45 lines the ATP pocket. The Beta-hairpin signature appears at Tyr91–Ile114. Residues Gln430–Ile592 enclose the Helicase C-terminal domain. Positions Lys621–Ala656 constitute a UVR domain.

This sequence belongs to the UvrB family. In terms of assembly, forms a heterotetramer with UvrA during the search for lesions. Interacts with UvrC in an incision complex.

The protein resides in the cytoplasm. The UvrABC repair system catalyzes the recognition and processing of DNA lesions. A damage recognition complex composed of 2 UvrA and 2 UvrB subunits scans DNA for abnormalities. Upon binding of the UvrA(2)B(2) complex to a putative damaged site, the DNA wraps around one UvrB monomer. DNA wrap is dependent on ATP binding by UvrB and probably causes local melting of the DNA helix, facilitating insertion of UvrB beta-hairpin between the DNA strands. Then UvrB probes one DNA strand for the presence of a lesion. If a lesion is found the UvrA subunits dissociate and the UvrB-DNA preincision complex is formed. This complex is subsequently bound by UvrC and the second UvrB is released. If no lesion is found, the DNA wraps around the other UvrB subunit that will check the other stand for damage. The chain is UvrABC system protein B from Rickettsia canadensis (strain McKiel).